The following is a 330-amino-acid chain: Ornithine carbamoyltransferase (330 aa).

Carbamoyl phosphate-binding positions include 57–60 (STRT), glutamine 84, arginine 108, and 135–138 (HPTQ). Residues asparagine 168, aspartate 232, and 236 to 237 (SM) contribute to the L-ornithine site. Carbamoyl phosphate contacts are provided by residues 273–274 (CL) and arginine 318.

Belongs to the aspartate/ornithine carbamoyltransferase superfamily. OTCase family.

Its subcellular location is the cytoplasm. It carries out the reaction carbamoyl phosphate + L-ornithine = L-citrulline + phosphate + H(+). The protein operates within amino-acid biosynthesis; L-arginine biosynthesis; L-arginine from L-ornithine and carbamoyl phosphate: step 1/3. Its function is as follows. Reversibly catalyzes the transfer of the carbamoyl group from carbamoyl phosphate (CP) to the N(epsilon) atom of ornithine (ORN) to produce L-citrulline. The protein is Ornithine carbamoyltransferase of Alkaliphilus metalliredigens (strain QYMF).